Consider the following 596-residue polypeptide: Elongation factor 4 (596 aa).

The tr-type G domain occupies 2–184; the sequence is KHIRNFSIIA…VIVAQIPSPE (183 aa). Residues 14–19 and 131–134 each bind GTP; these read DHGKST and NKID.

This sequence belongs to the TRAFAC class translation factor GTPase superfamily. Classic translation factor GTPase family. LepA subfamily.

Its subcellular location is the cell inner membrane. The catalysed reaction is GTP + H2O = GDP + phosphate + H(+). Required for accurate and efficient protein synthesis under certain stress conditions. May act as a fidelity factor of the translation reaction, by catalyzing a one-codon backward translocation of tRNAs on improperly translocated ribosomes. Back-translocation proceeds from a post-translocation (POST) complex to a pre-translocation (PRE) complex, thus giving elongation factor G a second chance to translocate the tRNAs correctly. Binds to ribosomes in a GTP-dependent manner. The protein is Elongation factor 4 of Shewanella sediminis (strain HAW-EB3).